A 275-amino-acid polypeptide reads, in one-letter code: MQNITDSWFVQGMIKATSDAWLKGWDERNGGNLTLRLDETDIAPFAANFHEKPRYIALSQPMPLLANTPFIVTGSGKFFRNVQLDPAANLGVVKIDSDGAGYHILWGLTHDAVPTSELPAHFLSHCERIKATHGKDRVIMHCHATNLIALTYVLENNTALITRKLWEGSTECLVVFPDGVGILPWMVPGTDEIGQATAQEMQKHSLVLWPFHGVFGSGPTLDETFGLIDTAEKSAEVLVKIYSMGGMKQTITREELVALGKRFGVTPLASAVALY.

The active site involves Glu-117. Zn(2+) contacts are provided by His-141, His-143, and His-212.

This sequence belongs to the aldolase class II family. RhaD subfamily. As to quaternary structure, homotetramer. The cofactor is Zn(2+).

It is found in the cytoplasm. It catalyses the reaction L-rhamnulose 1-phosphate = (S)-lactaldehyde + dihydroxyacetone phosphate. It functions in the pathway carbohydrate degradation; L-rhamnose degradation; glycerone phosphate from L-rhamnose: step 3/3. In terms of biological role, catalyzes the reversible cleavage of L-rhamnulose-1-phosphate to dihydroxyacetone phosphate (DHAP) and L-lactaldehyde. The chain is Rhamnulose-1-phosphate aldolase from Salmonella choleraesuis (strain SC-B67).